Reading from the N-terminus, the 268-residue chain is Ribosomal RNA small subunit methyltransferase A (268 aa).

The S-adenosyl-L-methionine site is built by asparagine 18, leucine 20, glycine 45, glutamate 66, aspartate 91, and asparagine 112.

It belongs to the class I-like SAM-binding methyltransferase superfamily. rRNA adenine N(6)-methyltransferase family. RsmA subfamily.

It localises to the cytoplasm. It catalyses the reaction adenosine(1518)/adenosine(1519) in 16S rRNA + 4 S-adenosyl-L-methionine = N(6)-dimethyladenosine(1518)/N(6)-dimethyladenosine(1519) in 16S rRNA + 4 S-adenosyl-L-homocysteine + 4 H(+). Functionally, specifically dimethylates two adjacent adenosines (A1518 and A1519) in the loop of a conserved hairpin near the 3'-end of 16S rRNA in the 30S particle. May play a critical role in biogenesis of 30S subunits. In Shewanella oneidensis (strain ATCC 700550 / JCM 31522 / CIP 106686 / LMG 19005 / NCIMB 14063 / MR-1), this protein is Ribosomal RNA small subunit methyltransferase A.